The primary structure comprises 139 residues: Putative nickel-responsive regulator (139 aa).

Positions 79, 90, 92, and 98 each coordinate Ni(2+).

This sequence belongs to the transcriptional regulatory CopG/NikR family. Ni(2+) serves as cofactor.

Its function is as follows. Transcriptional regulator. This chain is Putative nickel-responsive regulator, found in Nitratidesulfovibrio vulgaris (strain DSM 19637 / Miyazaki F) (Desulfovibrio vulgaris).